A 708-amino-acid chain; its full sequence is Lactotransferrin (708 aa).

Positions 1-19 (MKLFVPALLSLGALGLCLA) are cleaved as a signal peptide. Transferrin-like domains lie at 25 to 352 (VRWC…NLRE) and 364 to 693 (VVWC…NLKK). 2 cysteine pairs are disulfide-bonded: C28–C64 and C38–C55. Residue D79 coordinates Fe cation. Residue K92 is part of the active site. Y111 serves as a coordination point for Fe cation. Cystine bridges form between C134–C217, C176–C192, C179–C202, C189–C200, and C250–C264. Residues T136, R140, A142, and G143 each coordinate hydrogencarbonate. Fe cation is bound at residue Y211. An N-linked (GlcNAc...) (high mannose) asparagine glycan is attached at N252. Fe cation is bound at residue H272. Residue S278 is the Nucleophile of the active site. Residue N300 is glycosylated (N-linked (GlcNAc...) (hybrid) asparagine). 2 disulfides stabilise this stretch: C367-C399 and C377-C390. 2 residues coordinate Fe cation: D414 and Y452. 8 disulfides stabilise this stretch: C424-C703, C444-C666, C476-C551, C500-C694, C510-C524, C521-C534, C592-C606, and C644-C649. T478, R482, A484, and G485 together coordinate hydrogencarbonate. N495 carries an N-linked (GlcNAc...) (complex) asparagine; alternate glycan. N495 carries N-linked (GlcNAc...) (high mannose) asparagine; alternate glycosylation. N-linked (GlcNAc...) (hybrid) asparagine; alternate glycosylation is present at N495. Y545 provides a ligand contact to Fe cation. A glycan (N-linked (GlcNAc...) (high mannose) asparagine) is linked at N564. Residue H614 participates in Fe cation binding.

Belongs to the transferrin family. In terms of assembly, monomer. Found in a complex with LTF, CLU, EPPIN and SEMG1. Found in a complex with MPO and LTF; interacts directly with CP, allows Fe(3+) incorporation into LTF and activation of CP ferroxidase activity. Poly-N-acetyllactosaminic carbohydrate moiety seems to be needed for TLR4 activation.

It is found in the secreted. The protein resides in the cytoplasmic granule. Its function is as follows. Transferrins are iron binding transport proteins which can bind two Fe(3+) ions in association with the binding of an anion, usually bicarbonate. Major iron-binding and multifunctional protein found in exocrine fluids such as breast milk and mucosal secretions. Has antimicrobial activity, which depends on the extracellular cation concentration. Antimicrobial properties include bacteriostasis, which is related to its ability to sequester free iron and thus inhibit microbial growth, as well as direct bactericidal properties leading to the release of lipopolysaccharides from the bacterial outer membrane. Can also prevent bacterial biofilm development in P.aeruginosa infection. Has weak antifungal activity against C.albicans. Has anabolic, differentiating and anti-apoptotic effects on osteoblasts and can also inhibit osteoclastogenesis, possibly playing a role in the regulation of bone growth. Promotes binding of species C adenoviruses to epithelial cells, promoting adenovirus infection. Can inhibit papillomavirus infections. Stimulates the TLR4 signaling pathway leading to NF-kappa-B activation and subsequent pro-inflammatory cytokine production while also interfering with the lipopolysaccharide (LPS)-stimulated TLR4 signaling. Inhibits neutrophil granulocyte migration to sites of apoptosis, when secreted by apoptotic cells. Stimulates VEGFA-mediated endothelial cell migration and proliferation. Binds heparin, chondroitin sulfate and possibly other glycosaminoglycans (GAGs). Also binds specifically to pneumococcal surface protein A (PspA), the lipid A portion of bacterial lipopolysaccharide (LPS), lysozyme and DNA. In terms of biological role, lactoferricin binds to the bacterial surface and is crucial for the bactericidal functions. Has some antiviral activity against papillomavirus infection. N-terminal region shows strong antifungal activity against C.albicans. Contains two BBXB heparin-binding consensus sequences that appear to form the predominate functional GAG-binding site. Functionally, the lactotransferrin transferrin-like domain 1 functions as a serine protease of the peptidase S60 family that cuts arginine rich regions. This function contributes to the antimicrobial activity. Shows a preferential cleavage at -Arg-Ser-Arg-Arg-|- and -Arg-Arg-Ser-Arg-|-, and of Z-Phe-Arg-|-aminomethylcoumarin sites. This is Lactotransferrin (LTF) from Bubalus bubalis (Domestic water buffalo).